Consider the following 693-residue polypeptide: Elongation factor G (693 aa).

A tr-type G domain is found at 8–283; it reads NKVRNFGIAA…AVCDYLPSPL (276 aa). GTP contacts are provided by residues 17-24, 81-85, and 135-138; these read AHIDAGKT, DTPGH, and NKMD.

This sequence belongs to the TRAFAC class translation factor GTPase superfamily. Classic translation factor GTPase family. EF-G/EF-2 subfamily.

Its subcellular location is the cytoplasm. In terms of biological role, catalyzes the GTP-dependent ribosomal translocation step during translation elongation. During this step, the ribosome changes from the pre-translocational (PRE) to the post-translocational (POST) state as the newly formed A-site-bound peptidyl-tRNA and P-site-bound deacylated tRNA move to the P and E sites, respectively. Catalyzes the coordinated movement of the two tRNA molecules, the mRNA and conformational changes in the ribosome. The chain is Elongation factor G from Endomicrobium trichonymphae.